A 185-amino-acid polypeptide reads, in one-letter code: Ubiquitin-fold modifier-conjugating enzyme 1 (185 aa).

The active-site Glycyl thioester intermediate is the Cys-119.

The protein belongs to the ubiquitin-conjugating enzyme family. UFC1 subfamily.

Functionally, E2-like enzyme which forms an intermediate with UFM1 via a thioester linkage. The protein is Ubiquitin-fold modifier-conjugating enzyme 1 of Oryza sativa subsp. japonica (Rice).